Here is a 1960-residue protein sequence, read N- to C-terminus: MTKVPQGFDFSFLNEEEARKILQVLERNEELRRAEKDRISKLQKTKRDIRWLQGATGEWFEEIQRKKFCNETDVNQMLKPPLTYRLQKGMAKNDPMELQTPRSKSLINQKPSVSSRMSFRSSFASLFSFRRPAKETLKLQSPRPNRCDERVRPSASVRGTASAKIYNSPVGNQPVASVFVPKPAIMREESGMPPPWDASLLESEFFQVLDDLDNKLAQEQSSGLMNTRVPFNYGSRTQFKLSHRNSHGHSTGRQQNYHSETSNMSIYNILRPGTPREGFKTFSPRTKTIYDMYRTREPRVLKEDFMQKNAFGSASLCFDSRQRSASPATGSFTARSLHFPADTQNKSSFTPVRHQQSPKRTPLSSIIWNRSDASRHRQNQEESLGVQAPMDIDPEEQYVSPRCFQESRRYEMCHSQNAYQSYPLNVPVANAMSPDTLENSENMPFYRQSNPFARSFFSSTFRQSREQRFGQNSFWSRQEEYSSWSDFPQSRGPFPSSDKDFEMFSVEANRAPSVCSQGVPSQHWRSHSSGHGTYVFRGREDSHCWRSDFQTSPLESMDTSHVNENQHPPHFVTPVGFSITDSSCHLQSSRLDSQQGYFPVEEAVDEDPYLCGKAQTPASSFRTPFPLSPDDGRESQSSSFPDSTATLQKIIPNKPDFLPIRNCTEVPVACSHSTDSLSLTDTQPNIPVTETNSEKDMDVSVSKDEQLNKTGQKSRPTGLPQYVLHTVISNDLPDFQNAHSRDSAQNDRYGFNAPATERSRRSPRVFSRKGTSQIHTTQRDQSNKLSKNKCFGGDRTLDSAASPPFIQESGTATSLPSPNQGCHQKTGSNEESSNTIKNSHWCFESTANQKSQPSREPALLDLEQSLSTHSTNDSKLAPGHSISRAPLHVASDAPQESFLDARLVPSTTVFSRSLSDQDPGQEQREEKDKATKSQDNQLAVNSTDNQESHDSPALPHDAVHCHPYSPFKNGRGKGRVRRRVSCIEKLTKTERAAAPTREGSGCAEDQRSIKDPELSTVYCTLPRKPASFLIHSRQQESKGTVASVRNGPLPFQIKNKAEVPTGKSTSDKPSSPESVSDAANAVSGTPKATKKMTDMKAIRSASVRKGPLPFLIKRAISCPSGEPCSLAESDDRQKSSVLGMDASPVIPRPGGRIFNSLEGEPSFRESAFSEKELAQEHTGKDRELRAPRMGLFNPSKKTPERLCATGSGKESGRALHKFKTTSMFSVSGDEENVNCLEVVSIYYTLPRKPSKKFCSLLQQYTQGTDSLRDAFQGETEALPNALEIDELNCPAQVQSGIPPPQDPKMQVDSAPCCLSHSPESKDVSQLPDRETSKSTLEEMTSVGPDVSLHREEPTTKEISPSNVSKTAIDDSLSREKREKELLRQILRAPLLHQEKGAGKEHTKSHQQPSKGGNSGPSGLPSRSEDNDENSQTRRDSGTCAGGMASGNGQYPWRDHMAAVVGDRSSRSQPRETSGTTGSDCQNPTDKMLSDSESQAFALTPALCKLQLAEEAQPGGAGLQSEASQAGSQETNTAEMRKVEDEEHMLTRDQTLLPRGNNKNKTNTDETKDRYSGKHRLAAISKASKRIPAKDLSPRKHVATIFSQSESESGFRRLSLYRPEDNPLSPEPTVKATESTDESSQMNVDKSETLLQETTVSSPGPPGQPCHQKSASILQPHLNGSPGVLETPPKSEGSKTQISGELGAPAQLTLTSPLEKGAGHQQRLSPPFPLEPTQKSTINSHCQLRHRSAPSPESEPEPHLYRSKSLKNFNVQSDLLCASHPPKARGRHFSENTSIDNALSQLSLEDGSFPNSGYNRRFKSSSELPASYESESWTSYSNRTRGPKSTSSISRPIDYGIFGKEQQLAFLENVKRSLTQGRLWKPSFLKNPGFLKDDVLNASNLSQSELVNSPAGQAPEDGVFPSEPLNIYKDDPVEPLVSDWDTDTTTDDEYYLDEKDKESEL.

The RabBD domain maps to 7-63; that stretch reads GFDFSFLNEEEARKILQVLERNEELRRAEKDRISKLQKTKRDIRWLQGATGEWFEEI. Composition is skewed to polar residues over residues 325 to 334, 342 to 366, and 635 to 645; these read ASPATGSFTA, DTQNKSSFTPVRHQQSPKRTPLSSI, and SQSSSFPDSTA. Disordered regions lie at residues 325–366, 616–645, 672–720, 734–835, and 910–976; these read ASPA…LSSI, TPASSFRTPFPLSPDDGRESQSSSFPDSTA, HSTD…TGLP, DFQN…SSNT, and FSRS…KGRV. The span at 673 to 682 shows a compositional bias: low complexity; that stretch reads STDSLSLTDT. A compositionally biased stretch (basic and acidic residues) spans 692–707; sequence NSEKDMDVSVSKDEQL. A phosphoserine mark is found at S799 and S802. Polar residues-rich tracts occupy residues 808–835 and 910–920; these read ESGTATSLPSPNQGCHQKTGSNEESSNT and FSRSLSDQDPG. Residues 921-932 show a composition bias toward basic and acidic residues; that stretch reads QEQREEKDKATK. The span at 933–945 shows a compositional bias: polar residues; that stretch reads SQDNQLAVNSTDN. The residue at position 1027 (S1027) is a Phosphoserine. Positions 1035 to 1095 are disordered; sequence QESKGTVASV…PKATKKMTDM (61 aa). Over residues 1062–1074 the composition is skewed to polar residues; the sequence is GKSTSDKPSSPES. 2 positions are modified to phosphoserine: S1083 and S1117. Disordered stretches follow at residues 1291–1375, 1389–1493, and 1510–1759; these read AQVQ…LSRE, PLLH…DSES, and EAQP…EPHL. The segment covering 1318–1336 has biased composition (basic and acidic residues); the sequence is PESKDVSQLPDRETSKSTL. The segment covering 1356-1365 has biased composition (polar residues); sequence KEISPSNVSK. The segment covering 1392–1403 has biased composition (basic and acidic residues); it reads HQEKGAGKEHTK. Composition is skewed to polar residues over residues 1470–1493 and 1520–1533; these read RETSGTTGSDCQNPTDKMLSDSES and SEASQAGSQETNTA. S1493 bears the Phosphoserine mark. Composition is skewed to basic and acidic residues over residues 1534–1546 and 1561–1571; these read EMRKVEDEEHMLT and TNTDETKDRYS. The segment covering 1572 to 1586 has biased composition (basic residues); the sequence is GKHRLAAISKASKRI. Over residues 1637-1657 the composition is skewed to polar residues; that stretch reads ESSQMNVDKSETLLQETTVSS. Phosphoserine is present on residues S1724, S1739, S1789, and S1819. Residues 1732-1741 are compositionally biased toward polar residues; that stretch reads TQKSTINSHC. 2 disordered regions span residues 1828–1847 and 1906–1960; these read ESESWTSYSNRTRGPKSTSS and VNSP…ESEL. A compositionally biased stretch (acidic residues) spans 1939–1950; sequence WDTDTTTDDEYY. A compositionally biased stretch (basic and acidic residues) spans 1951–1960; that stretch reads LDEKDKESEL.

In terms of assembly, interacts with RAB27A.

In terms of biological role, may act as Rab effector protein and play a role in vesicle trafficking. The protein is Exophilin-5 of Mus musculus (Mouse).